Reading from the N-terminus, the 227-residue chain is Putative N-acetylmannosamine-6-phosphate 2-epimerase (227 aa).

It belongs to the NanE family.

It carries out the reaction an N-acyl-D-glucosamine 6-phosphate = an N-acyl-D-mannosamine 6-phosphate. It participates in amino-sugar metabolism; N-acetylneuraminate degradation; D-fructose 6-phosphate from N-acetylneuraminate: step 3/5. Functionally, converts N-acetylmannosamine-6-phosphate (ManNAc-6-P) to N-acetylglucosamine-6-phosphate (GlcNAc-6-P). This Shouchella clausii (strain KSM-K16) (Alkalihalobacillus clausii) protein is Putative N-acetylmannosamine-6-phosphate 2-epimerase.